The primary structure comprises 306 residues: Hydroxypyruvate reductase (306 aa).

NAD(+) is bound by residues 152-153 (NI), aspartate 172, 228-230 (TAR), and aspartate 254. The active site involves arginine 230. The active site involves glutamate 259. Histidine 280 serves as the catalytic Proton donor. NAD(+) is bound at residue 280-283 (HIGA).

The protein belongs to the D-isomer specific 2-hydroxyacid dehydrogenase family.

It carries out the reaction (R)-glycerate + NAD(+) = 3-hydroxypyruvate + NADH + H(+). The enzyme catalyses (R)-glycerate + NADP(+) = 3-hydroxypyruvate + NADPH + H(+). Functionally, involved in the degradation of L-serine via 3-hydroxypyruvate. Catalyzes the non-reversible reduction of 3-hydroxypyruvate to yield D-glycerate. This is Hydroxypyruvate reductase from Thermotoga maritima (strain ATCC 43589 / DSM 3109 / JCM 10099 / NBRC 100826 / MSB8).